Here is a 791-residue protein sequence, read N- to C-terminus: Phenylalanine--tRNA ligase beta subunit (791 aa).

Residues 39 to 148 form the tRNA-binding domain; that stretch reads AADFSGVVVA…ADAPVGADIR (110 aa). The B5 domain occupies 401–476; sequence PLRAPVRLRE…RVYGYDAIPR (76 aa). Residues Asp-454, Asp-460, Glu-463, and Glu-464 each contribute to the Mg(2+) site. Residues 697-790 form the FDX-ACB domain; that stretch reads SRFPLVRRDL…LAADFGAKLR (94 aa).

This sequence belongs to the phenylalanyl-tRNA synthetase beta subunit family. Type 1 subfamily. In terms of assembly, tetramer of two alpha and two beta subunits. Mg(2+) serves as cofactor.

The protein resides in the cytoplasm. The catalysed reaction is tRNA(Phe) + L-phenylalanine + ATP = L-phenylalanyl-tRNA(Phe) + AMP + diphosphate + H(+). The protein is Phenylalanine--tRNA ligase beta subunit of Methylococcus capsulatus (strain ATCC 33009 / NCIMB 11132 / Bath).